Here is a 167-residue protein sequence, read N- to C-terminus: MKIILRADVENLGRLGDVVTVKPGFGRNYLLPQGLGMLASQANLKAFELERKKLQARMDALRNAAADIAAKLEGLVLAIPMRVGENDKLYGSVTTAIIGDGLAAQGIEVDRRRILLDSAIRALGEYPVRVRLHADVTAEILVKVVSEDKVNDVAESAPAEEPEAAAE.

Belongs to the bacterial ribosomal protein bL9 family.

In terms of biological role, binds to the 23S rRNA. This is Large ribosomal subunit protein bL9 from Nitratidesulfovibrio vulgaris (strain ATCC 29579 / DSM 644 / CCUG 34227 / NCIMB 8303 / VKM B-1760 / Hildenborough) (Desulfovibrio vulgaris).